The sequence spans 238 residues: D-aminoacyl-tRNA deacylase (238 aa).

The protein belongs to the DtdA deacylase family. In terms of assembly, monomer. Requires Zn(2+) as cofactor.

The enzyme catalyses a D-aminoacyl-tRNA + H2O = a tRNA + a D-alpha-amino acid + H(+). It carries out the reaction glycyl-tRNA(Ala) + H2O = tRNA(Ala) + glycine + H(+). The catalysed reaction is D-tyrosyl-tRNA(Tyr) + H2O = D-tyrosine + tRNA(Tyr). D-aminoacyl-tRNA deacylase with broad substrate specificity. By recycling D-aminoacyl-tRNA to D-amino acids and free tRNA molecules, this enzyme counteracts the toxicity associated with the formation of D-aminoacyl-tRNA entities in vivo. Catalyzes the hydrolysis of D-tyrosyl-tRNA(Tyr). In Saccharolobus solfataricus (strain ATCC 35092 / DSM 1617 / JCM 11322 / P2) (Sulfolobus solfataricus), this protein is D-aminoacyl-tRNA deacylase.